Reading from the N-terminus, the 340-residue chain is GPALPP motifs-containing protein 1 (340 aa).

Positions 1–304 (MARDLIGPAL…PQERIPFDRD (304 aa)) are disordered. The residue at position 2 (alanine 2) is an N-acetylalanine. Residues 7–12 (GPALPP) carry the GPALPP motif 1 motif. Position 28 is a phosphoserine (serine 28). The short motif at 32–37 (GPALPP) is the GPALPP motif 2 element. The span at 60 to 69 (GNQESEEDDS) shows a compositional bias: acidic residues. A GPALPP motif 3 motif is present at residues 92–97 (GPALPP). At serine 105 the chain carries Phosphoserine. A compositionally biased stretch (pro residues) spans 107–116 (PRPIIGPALP). The GPALPP motif 4 motif lies at 112 to 117 (GPALPP). Over residues 124 to 133 (QKSDKGRDDP) the composition is skewed to basic and acidic residues. Phosphothreonine is present on threonine 138. Residues serine 140 and serine 141 each carry the phosphoserine modification. Composition is skewed to basic and acidic residues over residues 163 to 187 (EFEKRAQRMKEKLTKGDDDSSKPIV), 227 to 261 (PADRERKAKETQEARKSSSKKDEEHILSGRDKRLA), 269 to 279 (ESKRSESLMDI), and 287 to 304 (KAAEDKNKPQERIPFDRD). Lysine 271 participates in a covalent cross-link: Glycyl lysine isopeptide (Lys-Gly) (interchain with G-Cter in SUMO2). Lysine 308 is covalently cross-linked (Glycyl lysine isopeptide (Lys-Gly) (interchain with G-Cter in SUMO2)).

This Homo sapiens (Human) protein is GPALPP motifs-containing protein 1 (GPALPP1).